Reading from the N-terminus, the 300-residue chain is ADP,ATP carrier protein 2 (300 aa).

Solcar repeat units follow at residues 8 to 100 (VAFI…YKQV), 113 to 203 (RYFI…ARGM), and 214 to 299 (VSWA…IKKV). 5 helical membrane-spanning segments follow: residues 10–39 (FIKD…LLLQ), 77–101 (LANV…KQVF), 112–132 (TRYF…SLCF), 181–201 (VSVQ…DTAR), and 213–233 (YVSW…SYPF). 2 residues coordinate ADP: R82 and K94. Residue R237 participates in ADP binding. The important for transport activity stretch occupies residues 237-242 (RRRMMM). A Nucleotide carrier signature motif motif is present at residues 237 to 242 (RRRMMM). Residues 276-293 (AFSNVLRGTGGAFVLVLY) traverse the membrane as a helical segment.

Belongs to the mitochondrial carrier (TC 2.A.29) family. Monomer.

The protein localises to the mitochondrion inner membrane. It carries out the reaction ADP(in) + ATP(out) = ADP(out) + ATP(in). With respect to regulation, the matrix-open state (m-state) is inhibited by the membrane-permeable bongkrekic acid (BKA). The cytoplasmic-open state (c-state) is inhibited by the membrane-impermeable toxic inhibitor carboxyatractyloside (CATR). Its function is as follows. ADP:ATP antiporter that mediates import of ADP into the mitochondrial matrix for ATP synthesis, and export of ATP out to fuel the cell. Cycles between the cytoplasmic-open state (c-state) and the matrix-open state (m-state): operates by the alternating access mechanism with a single substrate-binding site intermittently exposed to either the cytosolic (c-state) or matrix (m-state) side of the inner mitochondrial membrane. This Anopheles gambiae (African malaria mosquito) protein is ADP,ATP carrier protein 2.